The chain runs to 549 residues: MKSDNIKKGIQRAPHRSLLRACGLGDNDFDKPFIGIANSFTEIVPGHIHLRELVEFVKEGIIAAGGIPFEFNTMAICDGISMNHEGMKYSLPSREIIAATVESMAKGHSFDGLVLMPSCDKVVPGMLMGAARVDVPTIVVTGGPMAAGQYKGKNADLITVFEAVGQESAGKISEEEVYEIEKCACPGAGSCSGLFTANTMACVTETLGLSLPFCATTHAADKANEKMAYNSGKQIIKLVEADLKPSDILTQEAFNNAITVDMALGGSSNTALHIPAIANEVEDVEVTLDLFDKISRVVPHICLISPAGTDTMMDLHKAGGIPGVLKTLGDKIDTSAITVTTKTLGENIKDVEVTNTDVIHPLDNPIHKDGGIAILKGNIAPNGSVVKKGAVSPDLMHLKGPAKVFNSEEEVTQAIFDHEVEEGDILVIRYEGPKGGPGMREMLNPTSALAGMQIKNVGLITDGRFSGGTRGPCIGHVSPEAMSDGPIGAIEDGDIIEIDIENRFINVELSDEEISNRLANRKNPKRDVDGWLSIYSKVVQSADTGAILR.

Mg(2+) is bound at residue Asp78. Cys119 serves as a coordination point for [2Fe-2S] cluster. Mg(2+)-binding residues include Asp120 and Lys121. An N6-carboxylysine modification is found at Lys121. Position 191 (Cys191) interacts with [2Fe-2S] cluster. A Mg(2+)-binding site is contributed by Glu441. Ser466 serves as the catalytic Proton acceptor.

Belongs to the IlvD/Edd family. As to quaternary structure, homodimer. [2Fe-2S] cluster is required as a cofactor. Mg(2+) serves as cofactor.

The enzyme catalyses (2R)-2,3-dihydroxy-3-methylbutanoate = 3-methyl-2-oxobutanoate + H2O. It carries out the reaction (2R,3R)-2,3-dihydroxy-3-methylpentanoate = (S)-3-methyl-2-oxopentanoate + H2O. Its pathway is amino-acid biosynthesis; L-isoleucine biosynthesis; L-isoleucine from 2-oxobutanoate: step 3/4. It functions in the pathway amino-acid biosynthesis; L-valine biosynthesis; L-valine from pyruvate: step 3/4. Functionally, functions in the biosynthesis of branched-chain amino acids. Catalyzes the dehydration of (2R,3R)-2,3-dihydroxy-3-methylpentanoate (2,3-dihydroxy-3-methylvalerate) into 2-oxo-3-methylpentanoate (2-oxo-3-methylvalerate) and of (2R)-2,3-dihydroxy-3-methylbutanoate (2,3-dihydroxyisovalerate) into 2-oxo-3-methylbutanoate (2-oxoisovalerate), the penultimate precursor to L-isoleucine and L-valine, respectively. This is Dihydroxy-acid dehydratase from Methanobrevibacter smithii (strain ATCC 35061 / DSM 861 / OCM 144 / PS).